The primary structure comprises 277 residues: Large ribosomal subunit protein uL2 (277 aa).

The interval 222–277 (GSVMNPNDHPHGGGEGKAPVGRKAPSTPWGKPALGLKTRNKKAKSDKLIVRRRNEK) is disordered. Basic and acidic residues predominate over residues 264–277 (AKSDKLIVRRRNEK).

The protein belongs to the universal ribosomal protein uL2 family. Part of the 50S ribosomal subunit. Forms a bridge to the 30S subunit in the 70S ribosome.

In terms of biological role, one of the primary rRNA binding proteins. Required for association of the 30S and 50S subunits to form the 70S ribosome, for tRNA binding and peptide bond formation. It has been suggested to have peptidyltransferase activity; this is somewhat controversial. Makes several contacts with the 16S rRNA in the 70S ribosome. The sequence is that of Large ribosomal subunit protein uL2 from Streptococcus thermophilus (strain CNRZ 1066).